The following is a 112-amino-acid chain: uncharacterized protein (112 aa).

This is an uncharacterized protein from Methanocaldococcus jannaschii (strain ATCC 43067 / DSM 2661 / JAL-1 / JCM 10045 / NBRC 100440) (Methanococcus jannaschii).